We begin with the raw amino-acid sequence, 156 residues long: Cyanate hydratase (156 aa).

Residues R96, E99, and S122 contribute to the active site.

This sequence belongs to the cyanase family.

It catalyses the reaction cyanate + hydrogencarbonate + 3 H(+) = NH4(+) + 2 CO2. In terms of biological role, catalyzes the reaction of cyanate with bicarbonate to produce ammonia and carbon dioxide. The protein is Cyanate hydratase of Pseudomonas entomophila (strain L48).